Here is a 623-residue protein sequence, read N- to C-terminus: (-)-limonene synthase TPS1, chloroplastic (623 aa).

The N-terminal 60 residues, 1 to 60, are a transit peptide targeting the chloroplast; that stretch reads MQCIAFHQFASSSSLPIWSSIDNRFTPKTSITSISKPKPKLKSKSNLKSRSRSSTCYPIQ. The disordered stretch occupies residues 29–52; it reads TSITSISKPKPKLKSKSNLKSRSR. The segment covering 37–51 has biased composition (basic residues); that stretch reads PKPKLKSKSNLKSRS. Residues Arg337, Asp374, Asp378, Arg516, and Asp519 each contribute to the (2E)-geranyl diphosphate site. Positions 374 and 378 each coordinate Mg(2+). Residues 374–378 carry the DDXXD motif motif; it reads DDMHD. Mg(2+) is bound by residues Asp519, Thr523, and Glu527.

This sequence belongs to the terpene synthase family. Tpsb subfamily. Mg(2+) serves as cofactor. Mn(2+) is required as a cofactor. Requires K(+) as cofactor. As to expression, trichome.

The protein localises to the plastid. Its subcellular location is the chloroplast. It catalyses the reaction (2E)-geranyl diphosphate = (4S)-limonene + diphosphate. The enzyme catalyses (2E)-geranyl diphosphate = terpinolene + diphosphate. The catalysed reaction is (2E)-geranyl diphosphate = (1R,5R)-alpha-pinene + diphosphate. It carries out the reaction (2E)-geranyl diphosphate = (1R,5R)-beta-pinene + diphosphate. It catalyses the reaction (2E)-geranyl diphosphate = beta-myrcene + diphosphate. The enzyme catalyses (2E)-geranyl diphosphate = (4R)-limonene + diphosphate. It functions in the pathway secondary metabolite biosynthesis; terpenoid biosynthesis. It participates in terpene metabolism; (4S)-limonene biosynthesis; (4S)-limonene from geranyl diphosphate: step 1/1. Functionally, involved in monoterpene (C10) olefins biosynthesis, constituants of cannabinoids and terpenoids-rich resins. Catalyzes mainly the conversion of (2E)-geranyl diphosphate to (-)-limonene, and also produces minor products such as (+)-limonene, (+)-alpha-pinene, terpinolene, (+)-beta-pinene and beta-myrcene. This is (-)-limonene synthase TPS1, chloroplastic from Cannabis sativa (Hemp).